Consider the following 535-residue polypeptide: Glucose-6-phosphate isomerase (535 aa).

Glu-359 (proton donor) is an active-site residue. Active-site residues include His-390 and Lys-505.

It belongs to the GPI family.

The protein resides in the cytoplasm. The catalysed reaction is alpha-D-glucose 6-phosphate = beta-D-fructose 6-phosphate. It participates in carbohydrate biosynthesis; gluconeogenesis. It functions in the pathway carbohydrate degradation; glycolysis; D-glyceraldehyde 3-phosphate and glycerone phosphate from D-glucose: step 2/4. Its function is as follows. Catalyzes the reversible isomerization of glucose-6-phosphate to fructose-6-phosphate. The chain is Glucose-6-phosphate isomerase from Treponema pallidum (strain Nichols).